Reading from the N-terminus, the 198-residue chain is MNLIPTVIEQTNRGERAYDIYSRLLKDRIIMLGSAIDDNVANSIVSQLLFLEAEDPEKDISIYINSPGGSITAGMAIYDTMQFIKPQVSTICTGMAASMGAFLLAAGEKGKRYALPNSEVMIHQPLGGAQGQATEIEIAAKRILSLRDKLNKILAERTGQPLEVIERDTDRDNFKTAEEAKEYGLIDKVLTRNIDAQK.

Ser98 (nucleophile) is an active-site residue. His123 is an active-site residue.

The protein belongs to the peptidase S14 family. Fourteen ClpP subunits assemble into 2 heptameric rings which stack back to back to give a disk-like structure with a central cavity, resembling the structure of eukaryotic proteasomes.

It localises to the cytoplasm. It carries out the reaction Hydrolysis of proteins to small peptides in the presence of ATP and magnesium. alpha-casein is the usual test substrate. In the absence of ATP, only oligopeptides shorter than five residues are hydrolyzed (such as succinyl-Leu-Tyr-|-NHMec, and Leu-Tyr-Leu-|-Tyr-Trp, in which cleavage of the -Tyr-|-Leu- and -Tyr-|-Trp bonds also occurs).. In terms of biological role, cleaves peptides in various proteins in a process that requires ATP hydrolysis. Has a chymotrypsin-like activity. Plays a major role in the degradation of misfolded proteins. ClpXP1 is involved in the complete degradation of the Site-2 clipped anti-sigma-W factor RsiW. This results in the release of SigW and the transcription activation of the genes under the control of the sigma-W factor. This chain is ATP-dependent Clp protease proteolytic subunit 1, found in Bacillus licheniformis (strain ATCC 14580 / DSM 13 / JCM 2505 / CCUG 7422 / NBRC 12200 / NCIMB 9375 / NCTC 10341 / NRRL NRS-1264 / Gibson 46).